Consider the following 64-residue polypeptide: Antimicrobial peptide 1 (64 aa).

Positions 1 to 26 (MAKVSSSLLKFAIVLILVLSMSAIIS) are cleaved as a signal peptide. 3 cysteine pairs are disulfide-bonded: Cys-29-Cys-46, Cys-36-Cys-50, and Cys-45-Cys-61.

This sequence belongs to the AMP family.

The protein resides in the secreted. Functionally, possesses antifungal and antibacterial activity. This is Antimicrobial peptide 1 from Mesembryanthemum crystallinum (Common ice plant).